The primary structure comprises 374 residues: PqqA peptide cyclase (374 aa).

The Radical SAM core domain occupies 13–230 (VPAPIAMLAE…EAEARLRGTL (218 aa)). Cys-27, Cys-31, and Cys-34 together coordinate [4Fe-4S] cluster.

This sequence belongs to the radical SAM superfamily. PqqE family. As to quaternary structure, interacts with PqqD. The interaction is necessary for activity of PqqE. [4Fe-4S] cluster is required as a cofactor.

It carries out the reaction [PQQ precursor protein] + S-adenosyl-L-methionine = E-Y cross-linked-[PQQ precursor protein] + 5'-deoxyadenosine + L-methionine + H(+). It functions in the pathway cofactor biosynthesis; pyrroloquinoline quinone biosynthesis. Catalyzes the cross-linking of a glutamate residue and a tyrosine residue in the PqqA protein as part of the biosynthesis of pyrroloquinoline quinone (PQQ). This Ruegeria pomeroyi (strain ATCC 700808 / DSM 15171 / DSS-3) (Silicibacter pomeroyi) protein is PqqA peptide cyclase.